Here is a 233-residue protein sequence, read N- to C-terminus: Octanoyltransferase (233 aa).

The BPL/LPL catalytic domain occupies 38–218 (AGGPDTLLLL…LVCDALDGVL (181 aa)). The span at 57 to 66 (RRTEPHERPL) shows a compositional bias: basic and acidic residues. The interval 57 to 77 (RRTEPHERPLDGTPVVDTDRG) is disordered. Residues 76–83 (RGGKITWH), 148–150 (AIG), and 161–163 (GFA) contribute to the substrate site. Cysteine 179 (acyl-thioester intermediate) is an active-site residue.

This sequence belongs to the LipB family.

It is found in the cytoplasm. It catalyses the reaction octanoyl-[ACP] + L-lysyl-[protein] = N(6)-octanoyl-L-lysyl-[protein] + holo-[ACP] + H(+). Its pathway is protein modification; protein lipoylation via endogenous pathway; protein N(6)-(lipoyl)lysine from octanoyl-[acyl-carrier-protein]: step 1/2. Its function is as follows. Catalyzes the transfer of endogenously produced octanoic acid from octanoyl-acyl-carrier-protein onto the lipoyl domains of lipoate-dependent enzymes. Lipoyl-ACP can also act as a substrate although octanoyl-ACP is likely to be the physiological substrate. This Mycobacterium avium (strain 104) protein is Octanoyltransferase.